We begin with the raw amino-acid sequence, 43 residues long: MADKPDISEVSQFDKTKLKKTETQEKNTLPTKETIEQEKQCEA.

2 stretches are compositionally biased toward basic and acidic residues: residues 1 to 25 and 33 to 43; these read MADKPDISEVSQFDKTKLKKTETQE and ETIEQEKQCEA. The interval 1–43 is disordered; it reads MADKPDISEVSQFDKTKLKKTETQEKNTLPTKETIEQEKQCEA.

Belongs to the thymosin beta family.

The protein resides in the cytoplasm. The protein localises to the cytoskeleton. Plays an important role in the organization of the cytoskeleton. Binds to and sequesters actin monomers (G actin) and therefore inhibits actin polymerization. The sequence is that of Thymosin beta-b from Cyprinus carpio (Common carp).